The following is a 376-amino-acid chain: Erythronate-4-phosphate dehydrogenase (376 aa).

2 residues coordinate substrate: Ser-45 and Thr-67. NAD(+)-binding positions include 127–128 (QV), Asp-147, and Thr-176. Arg-209 is an active-site residue. Residue Asp-233 coordinates NAD(+). Glu-238 is a catalytic residue. Residue His-255 is the Proton donor of the active site. Gly-258 contacts NAD(+). Residue Tyr-259 participates in substrate binding.

It belongs to the D-isomer specific 2-hydroxyacid dehydrogenase family. PdxB subfamily. Homodimer.

It is found in the cytoplasm. The catalysed reaction is 4-phospho-D-erythronate + NAD(+) = (R)-3-hydroxy-2-oxo-4-phosphooxybutanoate + NADH + H(+). The protein operates within cofactor biosynthesis; pyridoxine 5'-phosphate biosynthesis; pyridoxine 5'-phosphate from D-erythrose 4-phosphate: step 2/5. Catalyzes the oxidation of erythronate-4-phosphate to 3-hydroxy-2-oxo-4-phosphonooxybutanoate. This is Erythronate-4-phosphate dehydrogenase from Aliivibrio fischeri (strain ATCC 700601 / ES114) (Vibrio fischeri).